The following is a 109-amino-acid chain: Hainantoxin-XVIII-7 (109 aa).

An N-terminal signal peptide occupies residues 1–18; sequence MKLSIIIIATSLVIAVVA. Residues 19 to 46 constitute a propeptide that is removed on maturation; that stretch reads FPSKDSKAIENDKTEQRMEIVVQETARA. Cystine bridges form between Cys-47/Cys-62, Cys-55/Cys-68, Cys-59/Cys-108, and Cys-61/Cys-81.

The protein belongs to the neurotoxin 25 family. F7 subfamily. As to expression, expressed by the venom gland.

The protein resides in the secreted. Functionally, putative ion channel inhibitor. This chain is Hainantoxin-XVIII-7, found in Cyriopagopus hainanus (Chinese bird spider).